The primary structure comprises 358 residues: NADH-quinone oxidoreductase subunit H (358 aa).

Helical transmembrane passes span 30–50 (VVIG…LIYM), 96–116 (FLYN…FSCL), 129–149 (VGVF…LLAG), 168–188 (IISY…LMGT), 201–221 (GWFI…YLIA), 265–285 (FIVA…LHIV), 297–317 (IPGF…LMWI), and 336–356 (YLVP…VFGL).

This sequence belongs to the complex I subunit 1 family. NDH-1 is composed of 14 different subunits. Subunits NuoA, H, J, K, L, M, N constitute the membrane sector of the complex.

The protein localises to the cell inner membrane. It carries out the reaction a quinone + NADH + 5 H(+)(in) = a quinol + NAD(+) + 4 H(+)(out). Functionally, NDH-1 shuttles electrons from NADH, via FMN and iron-sulfur (Fe-S) centers, to quinones in the respiratory chain. The immediate electron acceptor for the enzyme in this species is believed to be ubiquinone. Couples the redox reaction to proton translocation (for every two electrons transferred, four hydrogen ions are translocated across the cytoplasmic membrane), and thus conserves the redox energy in a proton gradient. This subunit may bind ubiquinone. The protein is NADH-quinone oxidoreductase subunit H of Bacteroides fragilis (strain ATCC 25285 / DSM 2151 / CCUG 4856 / JCM 11019 / LMG 10263 / NCTC 9343 / Onslow / VPI 2553 / EN-2).